Here is a 381-residue protein sequence, read N- to C-terminus: Cytochrome b (381 aa).

4 consecutive transmembrane segments (helical) span residues phenylalanine 33–methionine 53, tryptophan 77–valine 98, tryptophan 113–leucine 133, and phenylalanine 178–leucine 198. Positions 83 and 97 each coordinate heme b. 2 residues coordinate heme b: histidine 182 and histidine 196. Residue histidine 201 participates in a ubiquinone binding. 4 helical membrane-spanning segments follow: residues isoleucine 226–serine 246, leucine 288–histidine 308, isoleucine 320–glycine 340, and phenylalanine 347–proline 367.

The protein belongs to the cytochrome b family. As to quaternary structure, the cytochrome bc1 complex contains 11 subunits: 3 respiratory subunits (MT-CYB, CYC1 and UQCRFS1), 2 core proteins (UQCRC1 and UQCRC2) and 6 low-molecular weight proteins (UQCRH/QCR6, UQCRB/QCR7, UQCRQ/QCR8, UQCR10/QCR9, UQCR11/QCR10 and a cleavage product of UQCRFS1). This cytochrome bc1 complex then forms a dimer. Requires heme b as cofactor.

It localises to the mitochondrion inner membrane. Functionally, component of the ubiquinol-cytochrome c reductase complex (complex III or cytochrome b-c1 complex) that is part of the mitochondrial respiratory chain. The b-c1 complex mediates electron transfer from ubiquinol to cytochrome c. Contributes to the generation of a proton gradient across the mitochondrial membrane that is then used for ATP synthesis. The chain is Cytochrome b (MT-CYB) from Pseudantechinus bilarni (Sandstone dibbler).